Consider the following 643-residue polypeptide: Phosphomethylpyrimidine synthase (643 aa).

Substrate contacts are provided by residues Asn248, Met277, Tyr306, His342, 362–364 (SRG), 403–406 (DGLR), and Glu442. His446 provides a ligand contact to Zn(2+). Residue Tyr469 participates in substrate binding. Zn(2+) is bound at residue His510. [4Fe-4S] cluster contacts are provided by Cys590, Cys593, and Cys598.

This sequence belongs to the ThiC family. Homodimer. It depends on [4Fe-4S] cluster as a cofactor.

The enzyme catalyses 5-amino-1-(5-phospho-beta-D-ribosyl)imidazole + S-adenosyl-L-methionine = 4-amino-2-methyl-5-(phosphooxymethyl)pyrimidine + CO + 5'-deoxyadenosine + formate + L-methionine + 3 H(+). It functions in the pathway cofactor biosynthesis; thiamine diphosphate biosynthesis. In terms of biological role, catalyzes the synthesis of the hydroxymethylpyrimidine phosphate (HMP-P) moiety of thiamine from aminoimidazole ribotide (AIR) in a radical S-adenosyl-L-methionine (SAM)-dependent reaction. The sequence is that of Phosphomethylpyrimidine synthase from Burkholderia mallei (strain NCTC 10247).